We begin with the raw amino-acid sequence, 101 residues long: CRISPR-associated endoribonuclease Cas2 (101 aa).

D17 contacts Mg(2+).

The protein belongs to the CRISPR-associated endoribonuclease Cas2 protein family. Homodimer, forms a heterotetramer with a Cas1 homodimer. The cofactor is Mg(2+).

Its function is as follows. CRISPR (clustered regularly interspaced short palindromic repeat), is an adaptive immune system that provides protection against mobile genetic elements (viruses, transposable elements and conjugative plasmids). CRISPR clusters contain sequences complementary to antecedent mobile elements and target invading nucleic acids. CRISPR clusters are transcribed and processed into CRISPR RNA (crRNA). Functions as a ssRNA-specific endoribonuclease. Involved in the integration of spacer DNA into the CRISPR cassette. The chain is CRISPR-associated endoribonuclease Cas2 from Methanopyrus kandleri (strain AV19 / DSM 6324 / JCM 9639 / NBRC 100938).